Reading from the N-terminus, the 222-residue chain is N-(5'-phosphoribosyl)anthranilate isomerase (222 aa).

It belongs to the TrpF family.

The catalysed reaction is N-(5-phospho-beta-D-ribosyl)anthranilate = 1-(2-carboxyphenylamino)-1-deoxy-D-ribulose 5-phosphate. Its pathway is amino-acid biosynthesis; L-tryptophan biosynthesis; L-tryptophan from chorismate: step 3/5. The chain is N-(5'-phosphoribosyl)anthranilate isomerase from Brucella abortus (strain S19).